Reading from the N-terminus, the 497-residue chain is Probable cytosol aminopeptidase (497 aa).

Residues Lys-263 and Asp-268 each contribute to the Mn(2+) site. Residue Lys-275 is part of the active site. Mn(2+) is bound by residues Asp-286, Asp-345, and Glu-347. Residue Arg-349 is part of the active site.

Belongs to the peptidase M17 family. It depends on Mn(2+) as a cofactor.

It is found in the cytoplasm. The catalysed reaction is Release of an N-terminal amino acid, Xaa-|-Yaa-, in which Xaa is preferably Leu, but may be other amino acids including Pro although not Arg or Lys, and Yaa may be Pro. Amino acid amides and methyl esters are also readily hydrolyzed, but rates on arylamides are exceedingly low.. The enzyme catalyses Release of an N-terminal amino acid, preferentially leucine, but not glutamic or aspartic acids.. In terms of biological role, presumably involved in the processing and regular turnover of intracellular proteins. Catalyzes the removal of unsubstituted N-terminal amino acids from various peptides. The sequence is that of Probable cytosol aminopeptidase from Sinorhizobium fredii (strain NBRC 101917 / NGR234).